The following is a 136-amino-acid chain: Secreted RxLR effector protein 10 (136 aa).

The signal sequence occupies residues 1-22 (MRVLNFVLTTTVVLLTSSEGIA). The RxLR-dEER signature appears at 42 to 56 (RSLRATENPGSDESR). Residues 42-78 (RSLRATENPGSDESRLNEKDTGFDPDGSSSKEDEDIG) form a disordered region. Over residues 53-63 (DESRLNEKDTG) the composition is skewed to basic and acidic residues.

The protein belongs to the RxLR effector family.

The protein resides in the secreted. It is found in the host cytoplasm. Its subcellular location is the host nucleus. Its function is as follows. Effector that acts as a broad suppressor of cell death to interrupt plant immunity. Inhibits cell death induced by cell death-inducing proteins, including the PAMP elicitor INF1 from P.infestans. This Plasmopara viticola (Downy mildew of grapevine) protein is Secreted RxLR effector protein 10.